A 330-amino-acid chain; its full sequence is Protein TIFY 11f (330 aa).

The Tify 1 domain maps to 61–97 (EAAAAAQLKIMYGGRMLVFDDFFPAGGAVVELVRAAA). The Jas signature appears at 124–142 (PVVRKVSLQRFVEKRRRMR). The short motif at 126–133 (VRKVSLQR) is the Nuclear localization signal element. The Tify 2 domain maps to 228–264 (EAAAAAQLKIMYGGRMLVFDDFFPAGGAVVELVRAAA). The disordered stretch occupies residues 267 to 330 (GRDDDGARAR…SGRTDDAAFY (64 aa)).

It belongs to the TIFY/JAZ family. Post-translationally, ubiquitinated. Targeted for degradation by the SCF(COI1) E3 ubiquitin ligase-proteasome pathway during jasmonate signaling.

The protein resides in the nucleus. Functionally, repressor of jasmonate responses. The chain is Protein TIFY 11f from Oryza sativa subsp. japonica (Rice).